Here is a 155-residue protein sequence, read N- to C-terminus: Phosphopantetheine adenylyltransferase (155 aa).

Belongs to the eukaryotic CoaD family.

The protein localises to the cytoplasm. The enzyme catalyses (R)-4'-phosphopantetheine + ATP + H(+) = 3'-dephospho-CoA + diphosphate. It functions in the pathway cofactor biosynthesis; coenzyme A biosynthesis. In terms of biological role, reversibly transfers an adenylyl group from ATP to 4'-phosphopantetheine, yielding dephospho-CoA (dPCoA) and pyrophosphate. This Pyrobaculum aerophilum (strain ATCC 51768 / DSM 7523 / JCM 9630 / CIP 104966 / NBRC 100827 / IM2) protein is Phosphopantetheine adenylyltransferase.